The following is a 621-amino-acid chain: SH2B adapter protein 2 (621 aa).

Tyrosine 47 bears the Phosphotyrosine mark. Residue serine 130 is modified to Phosphoserine. Positions 143–166 (RRSSPEPDGGATPKAAEPASEPRD) are disordered. The PH domain maps to 186 to 299 (DIQREGALRF…WVADIQGCVD (114 aa)). Serine 303 carries the post-translational modification Phosphoserine. An SH2 domain is found at 409–507 (WFHGTLSRVK…SADITLRSYV (99 aa)). Disordered regions lie at residues 507–528 (VRAQ…PVPA) and 549–611 (PASP…LGRA). The span at 552–571 (PSNGAGASSSSGSSSSATSL) shows a compositional bias: low complexity. Phosphoserine is present on serine 597. Residue tyrosine 618 is modified to Phosphotyrosine.

Belongs to the SH2B adapter family. Homodimer. Interacts with KIT/c-KIT, SHC1, EPOR, PDGFR, VAV1 and VAV3. Interacts (via N-terminal region) with SHC1. Interacts (via the phosphorylated C-terminus) with GRB2. Interacts (via its SH2 domain) with EPOR, INSR and KIT. Interacts with GRB2 after B-cell antigen receptor stimulation. Interacts (via PH domain) with VAV3. Interacts with NTRK1, NTRK2 and NTRK3 (phosphorylated); after stimulation of the receptor by its extracellular ligand and subsequent autophosphorylation of the receptor. Binds INSR, GRB2, ASB6 and CAP. Insulin stimulation leads to dissociation of CAP. Binds CBS only when SH2B2/APS has become phosphorylated. INSR binding does not depend on the phosphorylation of SH2B2/APS. Post-translationally, tyrosine phosphorylated by JAK2, KIT and other kinases activated by B-cell receptor in response to stimulation with cytokines, IL3, IL5, PDGF, IGF1, IGF2, CSF2/GM-CSF and cross-linking of the B-cell receptor complex. In terms of tissue distribution, strongly expressed in brain; also expressed in spleen, kidney and skeletal muscle, and at low levels in small intestine and bone marrow. Strongly expressed in B-cell lines, but not T-cell lines. Also expressed in myeloid and fibroblast cell lines.

Its subcellular location is the cytoplasm. It localises to the cell membrane. In terms of biological role, adapter protein for several members of the tyrosine kinase receptor family. Involved in multiple signaling pathways. May be involved in coupling from immunoreceptor to Ras signaling. Acts as a negative regulator of cytokine signaling in collaboration with CBL. Binds to EPOR and suppresses EPO-induced STAT5 activation, possibly through a masking effect on STAT5 docking sites in EPOR. Suppresses PDGF-induced mitogenesis. May induce cytoskeletal reorganization via interaction with VAV3. The protein is SH2B adapter protein 2 (Sh2b2) of Mus musculus (Mouse).